Consider the following 159-residue polypeptide: 2-C-methyl-D-erythritol 2,4-cyclodiphosphate synthase (159 aa).

Aspartate 11 and histidine 13 together coordinate a divalent metal cation. Residues 11-13 and 37-38 each bind 4-CDP-2-C-methyl-D-erythritol 2-phosphate; these read DVH and HS. Histidine 45 contacts a divalent metal cation. 4-CDP-2-C-methyl-D-erythritol 2-phosphate contacts are provided by residues 59–61 and 64–68; these read DIG and FPDSD.

Belongs to the IspF family. In terms of assembly, homotrimer. Requires a divalent metal cation as cofactor.

It carries out the reaction 4-CDP-2-C-methyl-D-erythritol 2-phosphate = 2-C-methyl-D-erythritol 2,4-cyclic diphosphate + CMP. It functions in the pathway isoprenoid biosynthesis; isopentenyl diphosphate biosynthesis via DXP pathway; isopentenyl diphosphate from 1-deoxy-D-xylulose 5-phosphate: step 4/6. Involved in the biosynthesis of isopentenyl diphosphate (IPP) and dimethylallyl diphosphate (DMAPP), two major building blocks of isoprenoid compounds. Catalyzes the conversion of 4-diphosphocytidyl-2-C-methyl-D-erythritol 2-phosphate (CDP-ME2P) to 2-C-methyl-D-erythritol 2,4-cyclodiphosphate (ME-CPP) with a corresponding release of cytidine 5-monophosphate (CMP). This chain is 2-C-methyl-D-erythritol 2,4-cyclodiphosphate synthase, found in Solibacter usitatus (strain Ellin6076).